The sequence spans 394 residues: Elongation factor Tu (394 aa).

A tr-type G domain is found at 10–204 (KPHVNVGTIG…AVDSYIPQPE (195 aa)). The segment at 19–26 (GHVDHGKT) is G1. Position 19–26 (19–26 (GHVDHGKT)) interacts with GTP. Thr-26 is a Mg(2+) binding site. The interval 60 to 64 (GITIS) is G2. The tract at residues 81-84 (DCPG) is G3. Residues 81 to 85 (DCPGH) and 136 to 139 (NKCD) contribute to the GTP site. The interval 136–139 (NKCD) is G4. The segment at 174–176 (SAV) is G5.

It belongs to the TRAFAC class translation factor GTPase superfamily. Classic translation factor GTPase family. EF-Tu/EF-1A subfamily. As to quaternary structure, monomer.

It localises to the cytoplasm. It catalyses the reaction GTP + H2O = GDP + phosphate + H(+). In terms of biological role, GTP hydrolase that promotes the GTP-dependent binding of aminoacyl-tRNA to the A-site of ribosomes during protein biosynthesis. The polypeptide is Elongation factor Tu (Akkermansia muciniphila (strain ATCC BAA-835 / DSM 22959 / JCM 33894 / BCRC 81048 / CCUG 64013 / CIP 107961 / Muc)).